The sequence spans 49 residues: Large ribosomal subunit protein bL33 (49 aa).

The protein belongs to the bacterial ribosomal protein bL33 family.

The sequence is that of Large ribosomal subunit protein bL33 from Fervidobacterium nodosum (strain ATCC 35602 / DSM 5306 / Rt17-B1).